The chain runs to 251 residues: Imidazole glycerol phosphate synthase subunit HisF (251 aa).

Residues D11 and D130 contribute to the active site.

This sequence belongs to the HisA/HisF family. Heterodimer of HisH and HisF.

It is found in the cytoplasm. The catalysed reaction is 5-[(5-phospho-1-deoxy-D-ribulos-1-ylimino)methylamino]-1-(5-phospho-beta-D-ribosyl)imidazole-4-carboxamide + L-glutamine = D-erythro-1-(imidazol-4-yl)glycerol 3-phosphate + 5-amino-1-(5-phospho-beta-D-ribosyl)imidazole-4-carboxamide + L-glutamate + H(+). The protein operates within amino-acid biosynthesis; L-histidine biosynthesis; L-histidine from 5-phospho-alpha-D-ribose 1-diphosphate: step 5/9. IGPS catalyzes the conversion of PRFAR and glutamine to IGP, AICAR and glutamate. The HisF subunit catalyzes the cyclization activity that produces IGP and AICAR from PRFAR using the ammonia provided by the HisH subunit. In Chlorobium chlorochromatii (strain CaD3), this protein is Imidazole glycerol phosphate synthase subunit HisF.